We begin with the raw amino-acid sequence, 595 residues long: MFS-type efflux pump MFS2 (595 aa).

The N-linked (GlcNAc...) asparagine glycan is linked to N62. The next 12 helical transmembrane spans lie at W69–Y89, V106–A126, L136–P156, F166–M186, G197–L217, W225–L245, P301–F321, P336–I356, L381–T401, I409–L429, A442–F462, and I478–A498.

This sequence belongs to the major facilitator superfamily. DHA1 family. Polyamines/proton antiporter (TC 2.A.1.2.16) subfamily.

It is found in the cell membrane. Its function is as follows. MFS-type efflux pump involved in the modulation susceptibility to fluconazole and voriconazole, 2 azoles with similar molecular structure. The chain is MFS-type efflux pump MFS2 from Trichophyton rubrum (strain ATCC MYA-4607 / CBS 118892) (Athlete's foot fungus).